We begin with the raw amino-acid sequence, 599 residues long: NADH-quinone oxidoreductase subunit C/D (599 aa).

Residues 1-189 are NADH dehydrogenase I subunit C; that stretch reads MTDLTTHDLA…DPFELTKQKE (189 aa). An NADH dehydrogenase I subunit D region spans residues 213-599; it reads DFMFLNLGPN…IDFVMSDVDR (387 aa).

This sequence in the N-terminal section; belongs to the complex I 30 kDa subunit family. The protein in the C-terminal section; belongs to the complex I 49 kDa subunit family. In terms of assembly, NDH-1 is composed of 13 different subunits. Subunits NuoB, CD, E, F, and G constitute the peripheral sector of the complex.

It localises to the cell inner membrane. It carries out the reaction a quinone + NADH + 5 H(+)(in) = a quinol + NAD(+) + 4 H(+)(out). Its function is as follows. NDH-1 shuttles electrons from NADH, via FMN and iron-sulfur (Fe-S) centers, to quinones in the respiratory chain. The immediate electron acceptor for the enzyme in this species is believed to be ubiquinone. Couples the redox reaction to proton translocation (for every two electrons transferred, four hydrogen ions are translocated across the cytoplasmic membrane), and thus conserves the redox energy in a proton gradient. The polypeptide is NADH-quinone oxidoreductase subunit C/D (Pectobacterium atrosepticum (strain SCRI 1043 / ATCC BAA-672) (Erwinia carotovora subsp. atroseptica)).